A 196-amino-acid polypeptide reads, in one-letter code: Adenine phosphoribosyltransferase (196 aa).

The protein belongs to the purine/pyrimidine phosphoribosyltransferase family. As to quaternary structure, homodimer.

It localises to the cytoplasm. It carries out the reaction AMP + diphosphate = 5-phospho-alpha-D-ribose 1-diphosphate + adenine. Its pathway is purine metabolism; AMP biosynthesis via salvage pathway; AMP from adenine: step 1/1. In terms of biological role, catalyzes a salvage reaction resulting in the formation of AMP, that is energically less costly than de novo synthesis. The sequence is that of Adenine phosphoribosyltransferase from Methylibium petroleiphilum (strain ATCC BAA-1232 / LMG 22953 / PM1).